The sequence spans 675 residues: Methionine--tRNA ligase (675 aa).

The short motif at 15-25 is the 'HIGH' region element; that stretch reads PYANGSIHLGH. Zn(2+) is bound by residues C146, C149, C159, and C162. The 'KMSKS' region signature appears at 332–336; that stretch reads KMSKS. Position 335 (K335) interacts with ATP. The 103-residue stretch at 573 to 675 folds into the tRNA-binding domain; that stretch reads DFAKVDMRIA…SGAQPGMQVK (103 aa).

It belongs to the class-I aminoacyl-tRNA synthetase family. MetG type 1 subfamily. Homodimer. Zn(2+) serves as cofactor.

The protein resides in the cytoplasm. It catalyses the reaction tRNA(Met) + L-methionine + ATP = L-methionyl-tRNA(Met) + AMP + diphosphate. Is required not only for elongation of protein synthesis but also for the initiation of all mRNA translation through initiator tRNA(fMet) aminoacylation. This Yersinia pestis bv. Antiqua (strain Angola) protein is Methionine--tRNA ligase.